A 132-amino-acid polypeptide reads, in one-letter code: Small ribosomal subunit protein bS16 (132 aa).

A compositionally biased stretch (basic and acidic residues) spans 82 to 107; that stretch reads DSKVQSKKEHNANKVKKEVKKPEAKK. Residues 82–132 are disordered; the sequence is DSKVQSKKEHNANKVKKEVKKPEAKKAAASKPASKPSASKSASQKKTVSKK. Residues 108-132 are compositionally biased toward low complexity; that stretch reads AAASKPASKPSASKSASQKKTVSKK.

The protein belongs to the bacterial ribosomal protein bS16 family.

The polypeptide is Small ribosomal subunit protein bS16 (Malacoplasma penetrans (strain HF-2) (Mycoplasma penetrans)).